The chain runs to 125 residues: Small ribosomal subunit protein uS12 (125 aa).

Positions 1–23 are disordered; the sequence is MATVNQLVRKGRTKRTAKSSVPA. A 3-methylthioaspartic acid modification is found at Asp-89. The interval 102-125 is disordered; the sequence is ADTAGVDKRRQGRSKYGAKRPKKK. Basic residues predominate over residues 111–125; it reads RQGRSKYGAKRPKKK.

It belongs to the universal ribosomal protein uS12 family. Part of the 30S ribosomal subunit. Contacts proteins S8 and S17. May interact with IF1 in the 30S initiation complex.

Functionally, with S4 and S5 plays an important role in translational accuracy. Its function is as follows. Interacts with and stabilizes bases of the 16S rRNA that are involved in tRNA selection in the A site and with the mRNA backbone. Located at the interface of the 30S and 50S subunits, it traverses the body of the 30S subunit contacting proteins on the other side and probably holding the rRNA structure together. The combined cluster of proteins S8, S12 and S17 appears to hold together the shoulder and platform of the 30S subunit. The sequence is that of Small ribosomal subunit protein uS12 from Halorhodospira halophila (strain DSM 244 / SL1) (Ectothiorhodospira halophila (strain DSM 244 / SL1)).